We begin with the raw amino-acid sequence, 439 residues long: Trigger factor (439 aa).

Residues 175 to 260 (GDRVTISYRS…VERLSVKDEI (86 aa)) form the PPIase FKBP-type domain.

Belongs to the FKBP-type PPIase family. Tig subfamily.

The protein resides in the cytoplasm. It catalyses the reaction [protein]-peptidylproline (omega=180) = [protein]-peptidylproline (omega=0). Functionally, involved in protein export. Acts as a chaperone by maintaining the newly synthesized protein in an open conformation. Functions as a peptidyl-prolyl cis-trans isomerase. This chain is Trigger factor, found in Anaplasma phagocytophilum (strain HZ).